Consider the following 117-residue polypeptide: G antigen 5 (117 aa).

The interval 1-117 is disordered; it reads MSWRGRSTYY…PEEGEKQSQC (117 aa). Acidic residues-rich tracts occupy residues 32–45 and 87–96; these read FSDEVEPATPEEGE and ECEDGPDGQE. The span at 103 to 117 shows a compositional bias: basic and acidic residues; the sequence is EEVKTPEEGEKQSQC.

It belongs to the GAGE family. As to expression, expressed in a variety of tumor tissues but not in normal tissues, except testis.

The sequence is that of G antigen 5 (GAGE5) from Homo sapiens (Human).